The primary structure comprises 199 residues: dTTP/UTP pyrophosphatase (199 aa).

The active-site Proton acceptor is aspartate 73.

It belongs to the Maf family. YhdE subfamily. The cofactor is a divalent metal cation.

Its subcellular location is the cytoplasm. It carries out the reaction dTTP + H2O = dTMP + diphosphate + H(+). The catalysed reaction is UTP + H2O = UMP + diphosphate + H(+). Nucleoside triphosphate pyrophosphatase that hydrolyzes dTTP and UTP. May have a dual role in cell division arrest and in preventing the incorporation of modified nucleotides into cellular nucleic acids. In Caldicellulosiruptor saccharolyticus (strain ATCC 43494 / DSM 8903 / Tp8T 6331), this protein is dTTP/UTP pyrophosphatase.